Reading from the N-terminus, the 134-residue chain is Phosphomevalonate dehydratase small subunit (134 aa).

Serine 62 serves as the catalytic Proton acceptor.

The protein belongs to the AcnX type II small subunit family. Heterodimer composed of a large subunit (PMDh-L) and a small subunit (PMDh-S).

It carries out the reaction (R)-5-phosphomevalonate = (2E)-3-methyl-5-phosphooxypent-2-enoate + H2O. Its pathway is isoprenoid biosynthesis; isopentenyl diphosphate biosynthesis via mevalonate pathway. Component of a hydro-lyase that catalyzes the dehydration of mevalonate 5-phosphate (MVA5P) to form trans-anhydromevalonate 5-phosphate (tAHMP). Involved in the archaeal mevalonate (MVA) pathway, which provides fundamental precursors for isoprenoid biosynthesis, such as isopentenyl diphosphate (IPP) and dimethylallyl diphosphate (DMAPP). The protein is Phosphomevalonate dehydratase small subunit of Pyrococcus furiosus (strain ATCC 43587 / DSM 3638 / JCM 8422 / Vc1).